The primary structure comprises 1028 residues: Beta-galactosidase (1028 aa).

Residues Asn104 and Asp203 each coordinate substrate. Asp203 is a Na(+) binding site. Mg(2+) is bound by residues Glu418, His420, and Glu463. Residues Glu463 and 539-542 (EYAH) contribute to the substrate site. Residue Glu463 is the Proton donor of the active site. The active-site Nucleophile is the Glu539. Asn599 is a Mg(2+) binding site. Phe603 and Asn606 together coordinate Na(+). Residues Asn606 and Trp1003 each contribute to the substrate site.

The protein belongs to the glycosyl hydrolase 2 family. As to quaternary structure, homotetramer. Mg(2+) is required as a cofactor. Na(+) serves as cofactor.

It carries out the reaction Hydrolysis of terminal non-reducing beta-D-galactose residues in beta-D-galactosides.. The protein is Beta-galactosidase of Enterobacter cloacae.